Here is a 385-residue protein sequence, read N- to C-terminus: Lipid-A-disaccharide synthase 2 (385 aa).

Belongs to the LpxB family.

It catalyses the reaction a lipid X + a UDP-2-N,3-O-bis[(3R)-3-hydroxyacyl]-alpha-D-glucosamine = a lipid A disaccharide + UDP + H(+). It participates in bacterial outer membrane biogenesis; LPS lipid A biosynthesis. In terms of biological role, condensation of UDP-2,3-diacylglucosamine and 2,3-diacylglucosamine-1-phosphate to form lipid A disaccharide, a precursor of lipid A, a phosphorylated glycolipid that anchors the lipopolysaccharide to the outer membrane of the cell. This is Lipid-A-disaccharide synthase 2 from Legionella pneumophila (strain Lens).